A 125-amino-acid polypeptide reads, in one-letter code: Protein AC4 (125 aa).

Belongs to the geminiviridae protein AC4/C4 family.

Pathogenicity determinant. May act as a suppressor of RNA-mediated gene silencing, also known as post-transcriptional gene silencing (PTGS), a mechanism of plant viral defense that limits the accumulation of viral RNAs. This is Protein AC4 from Cucurbita moschata (Winter crookneck squash).